We begin with the raw amino-acid sequence, 344 residues long: Small ribosomal subunit biogenesis GTPase RsgA (344 aa).

In terms of domain architecture, CP-type G spans 100–268 (KNELSRPDYY…LIDSPGIREF (169 aa)). GTP is bound by residues 156–159 (NKID) and 210–218 (GQSGVGKSS). Zn(2+)-binding residues include Cys-292, Cys-297, His-299, and Cys-305.

Belongs to the TRAFAC class YlqF/YawG GTPase family. RsgA subfamily. In terms of assembly, monomer. Associates with 30S ribosomal subunit, binds 16S rRNA. It depends on Zn(2+) as a cofactor.

The protein localises to the cytoplasm. Its function is as follows. One of several proteins that assist in the late maturation steps of the functional core of the 30S ribosomal subunit. Helps release RbfA from mature subunits. May play a role in the assembly of ribosomal proteins into the subunit. Circularly permuted GTPase that catalyzes slow GTP hydrolysis, GTPase activity is stimulated by the 30S ribosomal subunit. The chain is Small ribosomal subunit biogenesis GTPase RsgA from Actinobacillus pleuropneumoniae serotype 5b (strain L20).